The following is a 369-amino-acid chain: MCPLWLLTLLLALSQALPFEQKGFWDFTLDDGLLMMNDEEASGSDTTSGVPDLDSVTPTFSAMCPFGCHCHLRVVQCSDLGLKTVPKEISPDTTLLDLQNNDISELRKDDFKGLQHLYALVLVNNKISKIHEKAFSPLRKLQKLYISKNHLVEIPPNLPSSLVELRIHDNRIRKVPKGVFSGLRNMNCIEMGGNPLENSGFEPGAFDGLKLNYLRISEAKLTGIPKDLPETLNELHLDHNKIQAIELEDLLRYSKLYRLGLGHNQIRMIENGSLSFLPTLRELHLDNNKLSRVPAGLPDLKLLQVVYLHSNNITKVGINDFCPMGFGVKRAYYNGISLFNNPVPYWEVQPATFRCVTDRLAIQFGNYKK.

An N-terminal signal peptide occupies residues 1–16; it reads MCPLWLLTLLLALSQA. Positions 17–37 are excised as a propeptide; sequence LPFEQKGFWDFTLDDGLLMMN. Residues S42 and S48 are each glycosylated (O-linked (Xyl...) (glycosaminoglycan) serine). Disulfide bonds link C64–C70 and C68–C77. LRR repeat units lie at residues 83–103, 104–127, 128–151, 152–172, 173–196, 197–221, 222–242, 243–266, 267–290, 291–313, 314–343, and 344–369; these read KTVP…NNDI, SELR…NNKI, SKIH…KNHL, VEIP…DNRI, RKVP…GNPL, ENSG…EAKL, TGIP…HNKI, QAIE…HNQI, RMIE…NNKL, SRVP…SNNI, TKVG…NNPV, and PYWE…NYKK. N271 and N312 each carry an N-linked (GlcNAc...) asparagine glycan. Cysteines 322 and 355 form a disulfide.

Belongs to the small leucine-rich proteoglycan (SLRP) family. SLRP class I subfamily. The two attached glycosaminoglycan chains can be either chondroitin sulfate or dermatan sulfate. In terms of tissue distribution, found in several connective tissues, especially in articular cartilages.

The protein localises to the secreted. Its subcellular location is the extracellular space. It localises to the extracellular matrix. May be involved in collagen fiber assembly. The polypeptide is Biglycan (Bgn) (Mus musculus (Mouse)).